Reading from the N-terminus, the 300-residue chain is uncharacterized protein (300 aa).

The next 10 helical transmembrane spans lie at 4-24 (IIIIMLFFLVSITWGTTWIAM), 31-51 (IPPFFATGIRFLAASPLLIIL), 68-88 (FQIFISIFYFSIPFTLMLYGG), 95-115 (ISSIIFANMPVLVLIISHFYL), 120-140 (NFIQKVGMVIALITLFFVLLI), 146-166 (CFFQWKGILALLLALLSHAVI), 177-197 (VSVITFNALPSLISGIFLSII), 214-234 (ILAVFYLGNFCGICGILSYFY), 242-262 (FYASIVFLIFPLIAGFLEIYI), and 272-292 (LWFIIPSGLGILLTLIPINFF). EamA domains lie at 15–139 (ITWG…FVLL) and 161–287 (LSHA…LTLI).

The protein belongs to the EamA transporter family.

Its subcellular location is the cell membrane. This is an uncharacterized protein from Buchnera aphidicola subsp. Schizaphis graminum (strain Sg).